Here is a 166-residue protein sequence, read N- to C-terminus: Peroxynitrite isomerase Rv2717c (166 aa).

Positions 28–34 match the GXWXGXG motif; sequence GTWRGQG. 2 residues coordinate heme b: threonine 40 and histidine 158.

The protein belongs to the nitrobindin family. Homodimer. It depends on heme b as a cofactor.

It localises to the cytoplasm. It catalyses the reaction peroxynitrite = nitrate. It participates in nitrogen metabolism. Its function is as follows. Heme-binding protein able to scavenge peroxynitrite and to protect free L-tyrosine against peroxynitrite-mediated nitration, by acting as a peroxynitrite isomerase that converts peroxynitrite to nitrate. Therefore, this protein likely plays a role in peroxynitrite sensing and in the detoxification of reactive nitrogen and oxygen species (RNS and ROS, respectively). Is able to bind nitric oxide (NO) in vitro, but may act as a sensor of peroxynitrite levels in vivo. The chain is Peroxynitrite isomerase Rv2717c from Arabidopsis thaliana (Mouse-ear cress).